A 261-amino-acid chain; its full sequence is MLHNITLSLVPEIITDNILIKAKEIAQFLNIPLSDRREEYPQALIWDRDGLSLCSISAKDGSHAKLLYIDFMGGKNGYRHANDCTTRQPIAKAVGIKPGFRPTVFDATAGMGGDGFVLACLGCRVTLCERSPIMYTLLQDGIERARQDSVMNKIMANLDLIHNNSKQFLENHGTNYHTIYMDPMYPHKKKSALNKKEMRVIRDLVGDDNDSDNLLETALTVAGNRVVVKRPKGAPYIEERKPHHEITMKNSRFDVYLTSYL.

Residues 129–130 (ER) and D182 each bind S-adenosyl-L-methionine.

This sequence belongs to the methyltransferase superfamily. RsmJ family.

The protein resides in the cytoplasm. The enzyme catalyses guanosine(1516) in 16S rRNA + S-adenosyl-L-methionine = N(2)-methylguanosine(1516) in 16S rRNA + S-adenosyl-L-homocysteine + H(+). Functionally, specifically methylates the guanosine in position 1516 of 16S rRNA. This chain is Ribosomal RNA small subunit methyltransferase J, found in Desulfotalea psychrophila (strain LSv54 / DSM 12343).